The sequence spans 706 residues: Protein MAM3 (706 aa).

Over 1–16 (MSFLPLRSRSRSGAPH) the chain is Vacuolar. The chain crosses the membrane as a helical span at residues 17 to 37 (WVYIILYHIFTIPKIYSLPLL). The Cytoplasmic segment spans residues 38–65 (SGSHVLNSRDVADSGHSVGDEASVTTYY). The region spanning 57 to 240 (DEASVTTYYI…MGVERLTKDE (184 aa)) is the CNNM transmembrane domain. A helical membrane pass occupies residues 66-86 (IISIILVLLGGVFAGLTLGLM). The Vacuolar portion of the chain corresponds to 87–120 (GQDEVYLKVISTSGSNSEKKLAKRVLDLISRGKH). Residues 121–141 (WVLVTLLLSNVITNETLPIVL) form a helical membrane-spanning segment. Over 142–145 (DRCL) the chain is Cytoplasmic. The chain crosses the membrane as a helical span at residues 146-166 (GGGWQAVVSSTILIVIFGEII). Topologically, residues 167-177 (PQSVCVKYGLQ) are vacuolar. A helical transmembrane segment spans residues 178–198 (VGAFFCPFVLVLMYLMYPVAY). Over 199–706 (PIATLLDYML…ANGSSSTIKR (508 aa)) the chain is Cytoplasmic. CBS domains follow at residues 259–320 (MTPI…DCLP) and 321–386 (ISHF…IVDE). Disordered regions lie at residues 421-495 (SHKE…ASNP), 515-540 (ITTH…LSAE), and 557-597 (LHTQ…ENQN). Residues 433 to 445 (ESSPLLSPSNSNH) are compositionally biased toward low complexity. A phosphoserine mark is found at Ser-439 and Ser-447. The span at 472–495 (AVLSPTPQVTEHGTIIPSNLASNP) shows a compositional bias: polar residues. The residue at position 527 (Ser-527) is a Phosphoserine. Low complexity predominate over residues 566–575 (TQVTTSTKTT). A compositionally biased stretch (polar residues) spans 576 to 597 (RNSPDSISIPNSGANHGNENQN). Residue Ser-603 is modified to Phosphoserine. Tyr-604 carries the phosphotyrosine modification. Position 607 is a phosphothreonine (Thr-607). A Phosphoserine modification is found at Ser-614. Positions 626-706 (IGPAKDWDES…ANGSSSTIKR (81 aa)) are disordered. Basic and acidic residues predominate over residues 630–639 (KDWDESKSEY). A compositionally biased stretch (low complexity) spans 658–680 (SSSNASLFSSIKNKFKNENANNN). A compositionally biased stretch (polar residues) spans 681–706 (DRSNFTDSLSRTSNYDANGSSSTIKR).

Belongs to the ACDP family.

The protein localises to the vacuole membrane. In terms of biological role, involved in metal homeostasis and more specially in manganese sensitivity. The polypeptide is Protein MAM3 (MAM3) (Saccharomyces cerevisiae (strain ATCC 204508 / S288c) (Baker's yeast)).